The following is a 393-amino-acid chain: 6-hydroxy-3-succinoylpyridine 3-monooxygenase HspB (393 aa).

Residues 6 to 35 (RVII…VLEA) and 277 to 287 (MRNGRVILIGD) each bind FAD.

It belongs to the PheA/TfdB FAD monooxygenase family. As to quaternary structure, homodimer. The cofactor is FAD.

The enzyme catalyses 4-(6-hydroxypyridin-3-yl)-4-oxobutanoate + 2 NADH + O2 + 2 H(+) = 2,5-dihydroxypyridine + succinate semialdehyde + 2 NAD(+) + H2O. It participates in alkaloid degradation; nicotine degradation. Its activity is regulated as follows. Inhibited by Cu(2+) and Zn(2+). Functionally, involved in the nicotine degradation. Catalyzes the cleavage of 6-hydroxy-3-succinoylpyridine (HSP) by incorporation of oxygen at the 3-position to produce to 2,5-dihydroxypyridine (DHP) and succinic semialdehyde. This Pseudomonas putida (strain DSM 28022 / S16) protein is 6-hydroxy-3-succinoylpyridine 3-monooxygenase HspB.